The primary structure comprises 94 residues: MAPKKIGAGKGDSSILAKISNYDIVSQGRRAACDAVYVSKKLLKSTGKAAWIAGTTFLILAVPLILELEQDHRLGEIDFEQASLLGTPPVGAML.

Residues 1–48 (MAPKKIGAGKGDSSILAKISNYDIVSQGRRAACDAVYVSKKLLKSTGK) lie on the Cytoplasmic side of the membrane. A helical membrane pass occupies residues 49 to 66 (AAWIAGTTFLILAVPLIL). The Mitochondrial intermembrane segment spans residues 67-94 (ELEQDHRLGEIDFEQASLLGTPPVGAML).

This sequence belongs to the Tom22 family. As to quaternary structure, forms part of the preprotein translocase complex of the outer mitochondrial membrane (TOM complex) which consists of at least 6 different proteins (TOM5, TOM6, TOM7, TOM20, TOM22/TOM9 and TOM40). In terms of tissue distribution, expressed in roots, flowers, young cotyledons and leaves.

It is found in the mitochondrion outer membrane. In terms of biological role, central component of the receptor complex responsible for the recognition and translocation of cytosolically synthesized mitochondrial preproteins. Together with TOM20 functions as the transit peptide receptor at the surface of the mitochondrion outer membrane and facilitates the movement of preproteins into the translocation pore. The polypeptide is Mitochondrial import receptor subunit TOM9-1 (TOM9-1) (Arabidopsis thaliana (Mouse-ear cress)).